The primary structure comprises 213 residues: Octanoyltransferase (213 aa).

The 176-residue stretch at 32-207 folds into the BPL/LPL catalytic domain; it reads DHTPDEIWLV…KLLALLNNPP (176 aa). Substrate contacts are provided by residues 71 to 78, 138 to 140, and 151 to 153; these read RGGQVTYH, SLG, and GLA. Cys169 functions as the Acyl-thioester intermediate in the catalytic mechanism.

This sequence belongs to the LipB family.

It localises to the cytoplasm. It carries out the reaction octanoyl-[ACP] + L-lysyl-[protein] = N(6)-octanoyl-L-lysyl-[protein] + holo-[ACP] + H(+). Its pathway is protein modification; protein lipoylation via endogenous pathway; protein N(6)-(lipoyl)lysine from octanoyl-[acyl-carrier-protein]: step 1/2. Its function is as follows. Catalyzes the transfer of endogenously produced octanoic acid from octanoyl-acyl-carrier-protein onto the lipoyl domains of lipoate-dependent enzymes. Lipoyl-ACP can also act as a substrate although octanoyl-ACP is likely to be the physiological substrate. The polypeptide is Octanoyltransferase (Enterobacter sp. (strain 638)).